Reading from the N-terminus, the 263-residue chain is 3-methyl-2-oxobutanoate hydroxymethyltransferase (263 aa).

D45 and D84 together coordinate Mg(2+). Residues 45-46 (DS), D84, and K112 each bind 3-methyl-2-oxobutanoate. E114 lines the Mg(2+) pocket. Residue E181 is the Proton acceptor of the active site.

The protein belongs to the PanB family. As to quaternary structure, homodecamer; pentamer of dimers. Requires Mg(2+) as cofactor.

Its subcellular location is the cytoplasm. It catalyses the reaction 3-methyl-2-oxobutanoate + (6R)-5,10-methylene-5,6,7,8-tetrahydrofolate + H2O = 2-dehydropantoate + (6S)-5,6,7,8-tetrahydrofolate. Its pathway is cofactor biosynthesis; (R)-pantothenate biosynthesis; (R)-pantoate from 3-methyl-2-oxobutanoate: step 1/2. Its function is as follows. Catalyzes the reversible reaction in which hydroxymethyl group from 5,10-methylenetetrahydrofolate is transferred onto alpha-ketoisovalerate to form ketopantoate. This Buchnera aphidicola subsp. Acyrthosiphon pisum (strain APS) (Acyrthosiphon pisum symbiotic bacterium) protein is 3-methyl-2-oxobutanoate hydroxymethyltransferase.